A 389-amino-acid chain; its full sequence is Dihydroorotase (389 aa).

The Zn(2+) site is built by His-51 and His-53. Residues 53-55 (HVR) and Asn-85 each bind substrate. Zn(2+) contacts are provided by Lys-133, His-158, His-192, and Asp-254. Lys-133 is subject to N6-carboxylysine. Residue Asp-254 is part of the active site. Residues His-258 and 272 to 273 (PG) each bind substrate.

It belongs to the metallo-dependent hydrolases superfamily. DHOase family. Class I DHOase subfamily. Zn(2+) is required as a cofactor.

The catalysed reaction is (S)-dihydroorotate + H2O = N-carbamoyl-L-aspartate + H(+). It participates in pyrimidine metabolism; UMP biosynthesis via de novo pathway; (S)-dihydroorotate from bicarbonate: step 3/3. Functionally, catalyzes the reversible cyclization of carbamoyl aspartate to dihydroorotate. The protein is Dihydroorotase of Sulfurisphaera tokodaii (strain DSM 16993 / JCM 10545 / NBRC 100140 / 7) (Sulfolobus tokodaii).